A 441-amino-acid polypeptide reads, in one-letter code: Ribosomal protein uS12 methylthiotransferase RimO (441 aa).

In terms of domain architecture, MTTase N-terminal spans 8 to 118; sequence PKIGFVSLGC…VLEHVHHYVP (111 aa). Residues cysteine 17, cysteine 53, cysteine 82, cysteine 150, cysteine 154, and cysteine 157 each coordinate [4Fe-4S] cluster. A Radical SAM core domain is found at 136-373; the sequence is LTPRHYAYLK…MQLQQQISAE (238 aa). Residues 376–441 form the TRAM domain; sequence QEKVGREILV…DEYDLWGSRV (66 aa).

This sequence belongs to the methylthiotransferase family. RimO subfamily. Requires [4Fe-4S] cluster as cofactor.

The protein resides in the cytoplasm. It carries out the reaction L-aspartate(89)-[ribosomal protein uS12]-hydrogen + (sulfur carrier)-SH + AH2 + 2 S-adenosyl-L-methionine = 3-methylsulfanyl-L-aspartate(89)-[ribosomal protein uS12]-hydrogen + (sulfur carrier)-H + 5'-deoxyadenosine + L-methionine + A + S-adenosyl-L-homocysteine + 2 H(+). In terms of biological role, catalyzes the methylthiolation of an aspartic acid residue of ribosomal protein uS12. This is Ribosomal protein uS12 methylthiotransferase RimO from Shigella boydii serotype 18 (strain CDC 3083-94 / BS512).